A 221-amino-acid chain; its full sequence is MDVKMHSSWKPILNEEFQKPYFSELISFVKSEYTTKVCYPKGNQIFSAFDHCHFDEVKVVIIGQDPYHGPNQANGLCFSVNDGIPFPPSLHNIFKEIETDLGKPMPSTGNLERWADQGVFLLNATLTVRQSEAGSHQGKGWEKFTDAVIKQISAEKENVVFLLWGGFAQKKAALIDSSKHHILKSGHPSPLSANRGFWFGNKHFSQTNDFLKSKGLKQIEW.

Residue Asp65 is the Proton acceptor of the active site.

This sequence belongs to the uracil-DNA glycosylase (UDG) superfamily. UNG family.

It localises to the cytoplasm. The enzyme catalyses Hydrolyzes single-stranded DNA or mismatched double-stranded DNA and polynucleotides, releasing free uracil.. In terms of biological role, excises uracil residues from the DNA which can arise as a result of misincorporation of dUMP residues by DNA polymerase or due to deamination of cytosine. The chain is Uracil-DNA glycosylase from Flavobacterium johnsoniae (strain ATCC 17061 / DSM 2064 / JCM 8514 / BCRC 14874 / CCUG 350202 / NBRC 14942 / NCIMB 11054 / UW101) (Cytophaga johnsonae).